Reading from the N-terminus, the 267-residue chain is Tryptophan synthase alpha chain (267 aa).

Catalysis depends on proton acceptor residues Glu-47 and Asp-58.

The protein belongs to the TrpA family. Tetramer of two alpha and two beta chains.

It catalyses the reaction (1S,2R)-1-C-(indol-3-yl)glycerol 3-phosphate + L-serine = D-glyceraldehyde 3-phosphate + L-tryptophan + H2O. Its pathway is amino-acid biosynthesis; L-tryptophan biosynthesis; L-tryptophan from chorismate: step 5/5. In terms of biological role, the alpha subunit is responsible for the aldol cleavage of indoleglycerol phosphate to indole and glyceraldehyde 3-phosphate. The polypeptide is Tryptophan synthase alpha chain (Chlorobaculum tepidum (strain ATCC 49652 / DSM 12025 / NBRC 103806 / TLS) (Chlorobium tepidum)).